A 230-amino-acid chain; its full sequence is UPF0173 metal-dependent hydrolase Pden_0574 (230 aa).

It belongs to the UPF0173 family.

In Paracoccus denitrificans (strain Pd 1222), this protein is UPF0173 metal-dependent hydrolase Pden_0574.